Reading from the N-terminus, the 238-residue chain is Ribonuclease PH (238 aa).

Residues arginine 86 and 124 to 126 (GTR) each bind phosphate.

The protein belongs to the RNase PH family. In terms of assembly, homohexameric ring arranged as a trimer of dimers.

The catalysed reaction is tRNA(n+1) + phosphate = tRNA(n) + a ribonucleoside 5'-diphosphate. In terms of biological role, phosphorolytic 3'-5' exoribonuclease that plays an important role in tRNA 3'-end maturation. Removes nucleotide residues following the 3'-CCA terminus of tRNAs; can also add nucleotides to the ends of RNA molecules by using nucleoside diphosphates as substrates, but this may not be physiologically important. Probably plays a role in initiation of 16S rRNA degradation (leading to ribosome degradation) during starvation. This Halorhodospira halophila (strain DSM 244 / SL1) (Ectothiorhodospira halophila (strain DSM 244 / SL1)) protein is Ribonuclease PH.